We begin with the raw amino-acid sequence, 170 residues long: Flavodoxin (170 aa).

A Flavodoxin-like domain is found at 4-165 (IGLFYGTQTG…RVKTWVSEIK (162 aa)).

Belongs to the flavodoxin family. It depends on FMN as a cofactor.

Its function is as follows. Low-potential electron donor to a number of redox enzymes. The sequence is that of Flavodoxin (isiB) from Synechocystis sp. (strain ATCC 27184 / PCC 6803 / Kazusa).